A 191-amino-acid chain; its full sequence is Probable protein adenylyltransferase HI_0977 (191 aa).

The Fido domain occupies Gly-37–Gln-162. ATP-binding positions include Lys-67–Gly-68, Gly-112–Gly-114, Arg-118, and Gln-145.

Belongs to the fic family.

The catalysed reaction is L-tyrosyl-[protein] + ATP = O-(5'-adenylyl)-L-tyrosyl-[protein] + diphosphate. It catalyses the reaction L-threonyl-[protein] + ATP = 3-O-(5'-adenylyl)-L-threonyl-[protein] + diphosphate. Probable adenylyltransferase that mediates the addition of adenosine 5'-monophosphate (AMP) to specific residues of target proteins. The chain is Probable protein adenylyltransferase HI_0977 from Haemophilus influenzae (strain ATCC 51907 / DSM 11121 / KW20 / Rd).